Consider the following 67-residue polypeptide: Protein AaeX (67 aa).

The next 2 membrane-spanning stretches (helical) occupy residues 3-23 (LFPVIVVFGLSFPPIFFKLLL) and 43-63 (FVWHPALFNTALYCCLFYLIS).

It belongs to the AaeX family.

It localises to the cell membrane. This Salmonella gallinarum (strain 287/91 / NCTC 13346) protein is Protein AaeX.